The following is a 440-amino-acid chain: Protein CapE (440 aa).

12 helical membrane-spanning segments follow: residues 7–27 (VILI…IGYL), 31–51 (IGFR…VYLL), 60–80 (LVYL…NIFL), 102–122 (FSIA…ISVF), 141–161 (FYYT…FYII), 179–199 (ELPM…FAFS), 204–224 (THIK…LITG), 249–269 (WWMI…IKVF), 324–344 (IFSY…GYGF), 360–380 (YYNG…LLLW), 382–402 (FTNF…SVLI), and 409–429 (FSFV…LLFI).

It is found in the cell membrane. The protein operates within capsule biogenesis; capsule polysaccharide biosynthesis. Required for the biosynthesis of type 1 capsular polysaccharide. The sequence is that of Protein CapE (capE) from Staphylococcus aureus.